The primary structure comprises 265 residues: Adenosylcobinamide-GDP ribazoletransferase (265 aa).

Helical transmembrane passes span 51 to 71 (LVGVILGVLCALVFYFTQLIF), 72 to 92 (PDSVAIVLTMAFSLLLTGAFH), 121 to 140 (IGTYGAATLVMALLAKFVLW), and 203 to 223 (VASLFLGVIQTSFIVIVLFAF).

It belongs to the CobS family. The cofactor is Mg(2+).

The protein resides in the cell inner membrane. It catalyses the reaction alpha-ribazole + adenosylcob(III)inamide-GDP = adenosylcob(III)alamin + GMP + H(+). The enzyme catalyses alpha-ribazole 5'-phosphate + adenosylcob(III)inamide-GDP = adenosylcob(III)alamin 5'-phosphate + GMP + H(+). Its pathway is cofactor biosynthesis; adenosylcobalamin biosynthesis; adenosylcobalamin from cob(II)yrinate a,c-diamide: step 7/7. Its function is as follows. Joins adenosylcobinamide-GDP and alpha-ribazole to generate adenosylcobalamin (Ado-cobalamin). Also synthesizes adenosylcobalamin 5'-phosphate from adenosylcobinamide-GDP and alpha-ribazole 5'-phosphate. This is Adenosylcobinamide-GDP ribazoletransferase from Vibrio parahaemolyticus serotype O3:K6 (strain RIMD 2210633).